The sequence spans 427 residues: MTEAMKITLSTQPADARWGDKATYSINNDGITLHLNGKDDLGLIQRAARKIDGLGIKQVALTGEGWDTERCWAFWAGYKGPKGVRTVMWPDLDDAQRQELDNRLTIIDWVRDTINAPAEELGPEQLAQRAVDLLCSVACDSVTYRITKGEDLREQNYMGLHTVGRGSERPPVLLALDYNPTGDKDAPVYACLVGKGITFDSGGYSIKQSAFMDSMKSDMGGAATVTGALAFAITRGLNKRVKLFLCCADNLISGNAFKLGDIIRYRNGKNAEVMNTDAEGRLVLADGLIDASAQHPQLIIDMATLTGAAKTALGNDYHALFSFDDTLAGRLLTSAAQENEPFWRLPLAEFHRNQLPSNFAELNNTGSAAYPAGASTAAGFLSHFVENYREGWLHIDCSATYRKAPVEQWAAGATGLGVRTIANLLTA.

2 residues coordinate Mn(2+): lysine 195 and aspartate 200. Lysine 207 is an active-site residue. Residues aspartate 218, aspartate 277, and glutamate 279 each contribute to the Mn(2+) site. The active site involves arginine 281.

Belongs to the peptidase M17 family. In terms of assembly, homohexamer. Requires Mn(2+) as cofactor.

Its subcellular location is the cytoplasm. It carries out the reaction Release of an N-terminal amino acid, Xaa, from a peptide or arylamide. Xaa is preferably Glu or Asp but may be other amino acids, including Leu, Met, His, Cys and Gln.. Functionally, probably plays an important role in intracellular peptide degradation. The polypeptide is Peptidase B (Salmonella choleraesuis (strain SC-B67)).